Reading from the N-terminus, the 317-residue chain is Xylose/arabinose import permease protein XacH (317 aa).

6 helical membrane passes run 40–60 (GIPF…NFAI), 98–118 (LVLL…LAIL), 132–152 (VYLL…LWMF), 179–199 (IALG…TMVV), 241–261 (AAVV…ALVG), and 290–310 (AAIA…YLYY). An ABC transmembrane type-1 domain is found at 94–309 (AQNNLVLLVG…ALGVIGPYLY (216 aa)).

The protein belongs to the binding-protein-dependent transport system permease family. As to quaternary structure, the complex is composed of two ATP-binding proteins (XacJ and XacK), two transmembrane proteins (XacH and XacI) and a solute-binding protein (XacG).

The protein localises to the cell membrane. Functionally, part of the ABC transporter complex XacGHIJK involved in the uptake of xylose and arabinose. Responsible for the translocation of the substrate across the membrane. The protein is Xylose/arabinose import permease protein XacH of Haloferax volcanii (strain ATCC 29605 / DSM 3757 / JCM 8879 / NBRC 14742 / NCIMB 2012 / VKM B-1768 / DS2) (Halobacterium volcanii).